The primary structure comprises 601 residues: Proteasome-associated ATPase (601 aa).

Gly residues predominate over residues 1–15 (MSGPRSGSGSGGSTG). Positions 1-29 (MSGPRSGSGSGGSTGRPGDADSQRSAYEK) are disordered. The span at 18–29 (GDADSQRSAYEK) shows a compositional bias: basic and acidic residues. Residues 19–106 (DADSQRSAYE…LKEEVDRLAQ (88 aa)) are a coiled coil. 289 to 294 (GCGKTL) is a binding site for ATP. The segment at 600–601 (YL) is docks into pockets in the proteasome alpha-ring.

The protein belongs to the AAA ATPase family. In terms of assembly, homohexamer. Assembles into a hexameric ring structure that caps the 20S proteasome core. Strongly interacts with the prokaryotic ubiquitin-like protein Pup through a hydrophobic interface; the interacting region of ARC lies in its N-terminal coiled-coil domain. There is one Pup binding site per ARC hexamer ring. Upon ATP-binding, the C-terminus of ARC interacts with the alpha-rings of the proteasome core, possibly by binding to the intersubunit pockets.

Its pathway is protein degradation; proteasomal Pup-dependent pathway. Its function is as follows. ATPase which is responsible for recognizing, binding, unfolding and translocation of pupylated proteins into the bacterial 20S proteasome core particle. May be essential for opening the gate of the 20S proteasome via an interaction with its C-terminus, thereby allowing substrate entry and access to the site of proteolysis. Thus, the C-termini of the proteasomal ATPase may function like a 'key in a lock' to induce gate opening and therefore regulate proteolysis. The chain is Proteasome-associated ATPase from Parafrankia sp. (strain EAN1pec).